Consider the following 148-residue polypeptide: uncharacterized protein (148 aa).

Its subcellular location is the plastid. The protein localises to the chloroplast. This is an uncharacterized protein from Porphyra purpurea (Red seaweed).